The sequence spans 191 residues: Holliday junction branch migration complex subunit RuvA (191 aa).

Positions 1–64 are domain I; sequence MIGRLTGTLA…EDAQLLYGFL (64 aa). Residues 65 to 138 are domain II; it reads TATERATFRQ…KGKLGPDLAL (74 aa). The flexible linker stretch occupies residues 138 to 142; sequence LPGAV. Residues 143 to 191 form a domain III region; the sequence is IRNEAQSDIVQALIALGYNEREAAAAIKPLPADVGVSDGIKLALRALGK.

It belongs to the RuvA family. As to quaternary structure, homotetramer. Forms an RuvA(8)-RuvB(12)-Holliday junction (HJ) complex. HJ DNA is sandwiched between 2 RuvA tetramers; dsDNA enters through RuvA and exits via RuvB. An RuvB hexamer assembles on each DNA strand where it exits the tetramer. Each RuvB hexamer is contacted by two RuvA subunits (via domain III) on 2 adjacent RuvB subunits; this complex drives branch migration. In the full resolvosome a probable DNA-RuvA(4)-RuvB(12)-RuvC(2) complex forms which resolves the HJ.

Its subcellular location is the cytoplasm. The RuvA-RuvB-RuvC complex processes Holliday junction (HJ) DNA during genetic recombination and DNA repair, while the RuvA-RuvB complex plays an important role in the rescue of blocked DNA replication forks via replication fork reversal (RFR). RuvA specifically binds to HJ cruciform DNA, conferring on it an open structure. The RuvB hexamer acts as an ATP-dependent pump, pulling dsDNA into and through the RuvAB complex. HJ branch migration allows RuvC to scan DNA until it finds its consensus sequence, where it cleaves and resolves the cruciform DNA. In Leptothrix cholodnii (strain ATCC 51168 / LMG 8142 / SP-6) (Leptothrix discophora (strain SP-6)), this protein is Holliday junction branch migration complex subunit RuvA.